Consider the following 186-residue polypeptide: Prorelaxin 1 (186 aa).

Residues 1 to 22 form the signal peptide; it reads MSSRLLLQLLGFWLFLSQPCRA. 3 disulfides stabilise this stretch: C36–C173, C48–C186, and C172–C177. A propeptide spans 58–158 (connecting peptide); that stretch reads SQEEPAPLAR…LKYLGSDAQS (101 aa). Q163 carries the pyrrolidone carboxylic acid modification.

Belongs to the insulin family. Heterodimer of a B chain and an A chain linked by two disulfide bonds.

Its subcellular location is the secreted. Its function is as follows. Relaxin is an ovarian hormone that acts with estrogen to produce dilatation of the birth canal in many mammals. The chain is Prorelaxin 1 (Rln1) from Rattus norvegicus (Rat).